Here is a 413-residue protein sequence, read N- to C-terminus: MATIPMDIVNDIFLRLPAKTLVRCRALSKPCYHLINDPDFIESHLHRVLQTGDHLMILLRGALRLYSVDLDSLDSVSDVEHPMKRGGPTEVFGSSNGLIGLSNSPTDLAVFNPSTRQIHRLPPSSIDLPDGSSTRGYVFYGLGYDSVSDDYKVVRMVQFKIDSEDELGCSFPYEVKVFSLKKNSWKRIESVASSIQLLFYFYYHLLYRRGYGVLAGNSLHWVLPRRPGLIAFNLIVRFDLALEEFEIVRFPEAVANGNVDIQMDIGVLDGCLCLMCNYDQSYVDVWMMKEYNVRDSWTKVFTVQKPKSVKSFSYMRPLVYSKDKKKVLLELNNTKLVWFDLESKKMSTLRIKDCPSSYSAELVVSSLVLGCKGDLNNIKYRKEQQAKEAREAKIMQNTKRRDDFLSKGFKLVL.

The F-box domain maps to 1-48 (MATIPMDIVNDIFLRLPAKTLVRCRALSKPCYHLINDPDFIESHLHRV).

As to quaternary structure, part of a SCF (ASK-cullin-F-box) protein ligase complex. Interacts with SKP1A/ASK1, SPK1B/ASK2, ASK9, ASK10, ASK11, ASK13, ASK14, ASK16, ASK17, ASK18 and ASK19. Interacts with TRAF1B. In terms of tissue distribution, expressed in seedling, root, stem, leaves, inflorescence and silique, especially in veins and trichomes.

Its subcellular location is the cytoplasm. It localises to the nucleus. The protein operates within protein modification; protein ubiquitination. In terms of biological role, component of SCF(ASK-cullin-F-box) E3 ubiquitin ligase complexes, which may mediate the ubiquitination and subsequent proteasomal degradation of target proteins. Regulates negatively both salicylic acid (SA)-dependent and SA-independent defense signaling. The polypeptide is F-box protein CPR1 (CPR1) (Arabidopsis thaliana (Mouse-ear cress)).